The sequence spans 186 residues: Ribosome-recycling factor (186 aa).

Belongs to the RRF family.

It is found in the cytoplasm. Its function is as follows. Responsible for the release of ribosomes from messenger RNA at the termination of protein biosynthesis. May increase the efficiency of translation by recycling ribosomes from one round of translation to another. The polypeptide is Ribosome-recycling factor (Herminiimonas arsenicoxydans).